Here is a 579-residue protein sequence, read N- to C-terminus: Insulin-like growth factor 2 mRNA-binding protein 3 (579 aa).

RRM domains lie at 2-75 and 81-156; these read NKLY…HSVP and RKLQ…YIPD. Residues 158-192 are disordered; sequence TAAQQNPSPQLRGRRGPGQRGSSRQASPGSVSKQK. Serine 165 carries the post-translational modification Phosphoserine. At serine 184 the chain carries Phosphoserine; by MTOR. 3 consecutive KH domains span residues 195 to 260, 276 to 343, and 405 to 470; these read DLPL…CKSI, EIPL…EEEI, and TETV…QGRI. Glycyl lysine isopeptide (Lys-Gly) (interchain with G-Cter in SUMO2) cross-links involve residues lysine 450 and lysine 475. Positions 487 to 553 constitute a KH 4 domain; the sequence is KLEAHIRVPS…YACQVAQRKI (67 aa). Position 528 is a phosphothreonine (threonine 528).

It belongs to the RRM IMP/VICKZ family. Can form homooligomers and heterooligomers with IGF2BP1 and IGF2BP3 in an RNA-dependent manner. Interacts with IGF2BP1. Interacts with ELAVL1, DHX9, HNRNPU, MATR3 and PABPC1. In terms of tissue distribution, expressed in oocytes, spermatogonia and spermatocytes (at protein level).

The protein resides in the nucleus. Its subcellular location is the cytoplasm. It localises to the P-body. It is found in the stress granule. RNA-binding factor that may recruit target transcripts to cytoplasmic protein-RNA complexes (mRNPs). This transcript 'caging' into mRNPs allows mRNA transport and transient storage. It also modulates the rate and location at which target transcripts encounter the translational apparatus and shields them from endonuclease attacks or microRNA-mediated degradation. Preferentially binds to N6-methyladenosine (m6A)-containing mRNAs and increases their stability. Binds to the 3'-UTR of CD44 mRNA and stabilizes it, hence promotes cell adhesion and invadopodia formation. Binds to beta-actin/ACTB and MYC transcripts. Increases MYC mRNA stability by binding to the coding region instability determinant (CRD) and binding is enhanced by m6A-modification of the CRD. Binds to the 5'-UTR of the insulin-like growth factor 2 (IGF2) mRNAs. This Mus musculus (Mouse) protein is Insulin-like growth factor 2 mRNA-binding protein 3 (Igf2bp3).